Consider the following 217-residue polypeptide: Adenylate kinase (217 aa).

10–15 (GAGKGT) provides a ligand contact to ATP. An NMP region spans residues 30 to 59 (STGDMLRAAVKAESELGLQVKEVMASGGLV). Residues Thr31, Arg36, 57-59 (GLV), 85-88 (GFPR), and Gln92 contribute to the AMP site. The segment at 122–159 (GRRVHEGSGRIYHVKYDPPKVEGKDDETGEALIQREDD) is LID. Residues Arg123 and 132-133 (IY) contribute to the ATP site. Positions 156 and 167 each coordinate AMP. Gly203 contributes to the ATP binding site.

It belongs to the adenylate kinase family. As to quaternary structure, monomer.

The protein resides in the cytoplasm. The enzyme catalyses AMP + ATP = 2 ADP. The protein operates within purine metabolism; AMP biosynthesis via salvage pathway; AMP from ADP: step 1/1. Its function is as follows. Catalyzes the reversible transfer of the terminal phosphate group between ATP and AMP. Plays an important role in cellular energy homeostasis and in adenine nucleotide metabolism. The protein is Adenylate kinase of Marinobacter nauticus (strain ATCC 700491 / DSM 11845 / VT8) (Marinobacter aquaeolei).